The sequence spans 189 residues: Elongation factor P 2 (189 aa).

This sequence belongs to the elongation factor P family.

It is found in the cytoplasm. It participates in protein biosynthesis; polypeptide chain elongation. Functionally, involved in peptide bond synthesis. Stimulates efficient translation and peptide-bond synthesis on native or reconstituted 70S ribosomes in vitro. Probably functions indirectly by altering the affinity of the ribosome for aminoacyl-tRNA, thus increasing their reactivity as acceptors for peptidyl transferase. The polypeptide is Elongation factor P 2 (Lactobacillus acidophilus (strain ATCC 700396 / NCK56 / N2 / NCFM)).